The following is a 357-amino-acid chain: Peptide chain release factor 1 (357 aa).

Q234 is subject to N5-methylglutamine.

The protein belongs to the prokaryotic/mitochondrial release factor family. Methylated by PrmC. Methylation increases the termination efficiency of RF1.

Its subcellular location is the cytoplasm. Its function is as follows. Peptide chain release factor 1 directs the termination of translation in response to the peptide chain termination codons UAG and UAA. The sequence is that of Peptide chain release factor 1 from Alkaliphilus oremlandii (strain OhILAs) (Clostridium oremlandii (strain OhILAs)).